A 348-amino-acid polypeptide reads, in one-letter code: D-alanine--D-alanine ligase (348 aa).

In terms of domain architecture, ATP-grasp spans 132–334; it reads KRVLESAGIP…YAELIEELVR (203 aa). 162-217 provides a ligand contact to ATP; that stretch reads EAVLSYPVFVKPANMGSSVGISKAESEEELRAAILLALTYDSRILIEQGVLAREIE. D288, E301, and N303 together coordinate Mg(2+).

This sequence belongs to the D-alanine--D-alanine ligase family. It depends on Mg(2+) as a cofactor. Requires Mn(2+) as cofactor.

The protein resides in the cytoplasm. The catalysed reaction is 2 D-alanine + ATP = D-alanyl-D-alanine + ADP + phosphate + H(+). The protein operates within cell wall biogenesis; peptidoglycan biosynthesis. Cell wall formation. This Streptococcus equi subsp. equi (strain 4047) protein is D-alanine--D-alanine ligase.